The primary structure comprises 334 residues: MRYRSDRVKIAIDVMGGDRAPDEILKGALLASKEVEGEIVLIGPEEIVRNKGLPFVSAFEIVKMDDPPLEVLRKKNSSMHVGLKLLSEGKVDAFVSAGATGPLFLGATSIVGKLEGIERPALGVAVPSLKGATVLIDAGANAKVRPEHLVDFAFMGIAYSKVLGAENPRVGLLNMGSEENKGPDDIKRAYQLLKEFLGDTFFGNIEGHDINLGTVDVVVADGFSGNVALKTMEGTAKLVTSVLKESIKDGGFLSLLGALLMKRSFDKMKEKLDPRSYGGTFILGVKGIVVKAHGSSDAKAIKHAIKVAEKGIRMNIVQEIERGISHVRNSGDGR.

The protein belongs to the PlsX family. Homodimer. Probably interacts with PlsY.

It localises to the cytoplasm. The catalysed reaction is a fatty acyl-[ACP] + phosphate = an acyl phosphate + holo-[ACP]. It functions in the pathway lipid metabolism; phospholipid metabolism. Catalyzes the reversible formation of acyl-phosphate (acyl-PO(4)) from acyl-[acyl-carrier-protein] (acyl-ACP). This enzyme utilizes acyl-ACP as fatty acyl donor, but not acyl-CoA. The polypeptide is Phosphate acyltransferase (Thermotoga petrophila (strain ATCC BAA-488 / DSM 13995 / JCM 10881 / RKU-1)).